A 211-amino-acid polypeptide reads, in one-letter code: FMN-dependent NADH:quinone oxidoreductase (211 aa).

17–19 serves as a coordination point for FMN; sequence SYS.

This sequence belongs to the azoreductase type 1 family. As to quaternary structure, homodimer. The cofactor is FMN.

The catalysed reaction is 2 a quinone + NADH + H(+) = 2 a 1,4-benzosemiquinone + NAD(+). It carries out the reaction N,N-dimethyl-1,4-phenylenediamine + anthranilate + 2 NAD(+) = 2-(4-dimethylaminophenyl)diazenylbenzoate + 2 NADH + 2 H(+). In terms of biological role, quinone reductase that provides resistance to thiol-specific stress caused by electrophilic quinones. Functionally, also exhibits azoreductase activity. Catalyzes the reductive cleavage of the azo bond in aromatic azo compounds to the corresponding amines. In Bacillus velezensis (strain DSM 23117 / BGSC 10A6 / LMG 26770 / FZB42) (Bacillus amyloliquefaciens subsp. plantarum), this protein is FMN-dependent NADH:quinone oxidoreductase.